A 581-amino-acid polypeptide reads, in one-letter code: Kelch-like protein 38 (581 aa).

Residues 34-101 (TDVSICSGAW…VYTGEVHISA (68 aa)) enclose the BTB domain. One can recognise a BACK domain in the interval 136–237 (CLGLVRLAEI…HPAFFHHFIA (102 aa)). Kelch repeat units follow at residues 285-332 (FLLL…TLHR), 334-383 (VYVL…THRN), 384-431 (FIFS…VKDQ), 433-479 (LYLF…VLGE), 480-521 (QIVI…VMGN), and 523-573 (LYVT…TLQC).

The sequence is that of Kelch-like protein 38 (Klhl38) from Mus musculus (Mouse).